A 535-amino-acid chain; its full sequence is Putative subtilisin-like proteinase 2 (535 aa).

Positions 1 to 17 (MFFVGVAVLAALQSVWG) are cleaved as a signal peptide. In terms of domain architecture, Peptidase S8 spans 221-475 (NWIFRVLQIK…IPRLGCKGRI (255 aa)). Active-site charge relay system residues include Asp255 and His277. Cys369 and Cys400 are disulfide-bonded. The active-site Charge relay system is Ser420. A helical transmembrane segment spans residues 489-509 (IVPLVFVVLITSALLYLLLIG).

The protein belongs to the peptidase S8 family.

Its subcellular location is the membrane. Its function is as follows. May be involved in the degradation of proteins for nutrient acquisition or possess a regulatory function by proteolytic activation of proproteins. This chain is Putative subtilisin-like proteinase 2 (SPL2), found in Encephalitozoon cuniculi (strain GB-M1) (Microsporidian parasite).